A 293-amino-acid chain; its full sequence is Acetylglutamate kinase (293 aa).

Substrate contacts are provided by residues 67–68 (GG), arginine 89, and asparagine 190.

This sequence belongs to the acetylglutamate kinase family. ArgB subfamily.

Its subcellular location is the cytoplasm. It catalyses the reaction N-acetyl-L-glutamate + ATP = N-acetyl-L-glutamyl 5-phosphate + ADP. The protein operates within amino-acid biosynthesis; L-arginine biosynthesis; N(2)-acetyl-L-ornithine from L-glutamate: step 2/4. Functionally, catalyzes the ATP-dependent phosphorylation of N-acetyl-L-glutamate. The polypeptide is Acetylglutamate kinase (Nitrosospira multiformis (strain ATCC 25196 / NCIMB 11849 / C 71)).